We begin with the raw amino-acid sequence, 402 residues long: Formate-dependent phosphoribosylglycinamide formyltransferase (402 aa).

N(1)-(5-phospho-beta-D-ribosyl)glycinamide-binding positions include 23–24 (EL) and Glu83. ATP is bound by residues Arg116, Lys157, 162 to 167 (SSGKGQ), 197 to 200 (ESQI), and Glu205. The 196-residue stretch at 121–316 (RLAAEELGLP…EFELHARAIL (196 aa)) folds into the ATP-grasp domain. The Mg(2+) site is built by Glu275 and Glu287. N(1)-(5-phospho-beta-D-ribosyl)glycinamide is bound by residues Asp294, Lys363, and 370–371 (RR).

Belongs to the PurK/PurT family. In terms of assembly, homodimer.

It catalyses the reaction N(1)-(5-phospho-beta-D-ribosyl)glycinamide + formate + ATP = N(2)-formyl-N(1)-(5-phospho-beta-D-ribosyl)glycinamide + ADP + phosphate + H(+). It participates in purine metabolism; IMP biosynthesis via de novo pathway; N(2)-formyl-N(1)-(5-phospho-D-ribosyl)glycinamide from N(1)-(5-phospho-D-ribosyl)glycinamide (formate route): step 1/1. In terms of biological role, involved in the de novo purine biosynthesis. Catalyzes the transfer of formate to 5-phospho-ribosyl-glycinamide (GAR), producing 5-phospho-ribosyl-N-formylglycinamide (FGAR). Formate is provided by PurU via hydrolysis of 10-formyl-tetrahydrofolate. The chain is Formate-dependent phosphoribosylglycinamide formyltransferase from Acinetobacter baumannii (strain ATCC 17978 / DSM 105126 / CIP 53.77 / LMG 1025 / NCDC KC755 / 5377).